Here is a 210-residue protein sequence, read N- to C-terminus: High-affinity nitrate transporter 3.1 (210 aa).

Residues 1 to 22 form the signal peptide; the sequence is MAIQKILFASLLICSLIQSIHG. Residues 178 to 198 form a helical membrane-spanning segment; it reads LDIASICFSVFSVVALVVFFV.

The protein belongs to the NAR2 family. As to quaternary structure, heterotetramer composed of two NRT2.1 and two NRT3.1. Interacts with NRT2.1 and NRT2.3. Interacts with all other NRT2 transporters, including NRT2.5. Highly expressed in roots. Detected in shoots.

The protein resides in the cell membrane. Acts as a dual component transporter with NTR2.1. Required for high-affinity nitrate transport. Acts as a repressor of lateral root initiation. May be involved in targeting NRT2 proteins to the plasma membrane. This is High-affinity nitrate transporter 3.1 (NRT3.1) from Arabidopsis thaliana (Mouse-ear cress).